Consider the following 208-residue polypeptide: Outer-membrane lipoprotein carrier protein (208 aa).

The N-terminal stretch at 1–23 (MKKTVKNLTALLTLALAAPWALA) is a signal peptide.

The protein belongs to the LolA family. Monomer.

It localises to the periplasm. Its function is as follows. Participates in the translocation of lipoproteins from the inner membrane to the outer membrane. Only forms a complex with a lipoprotein if the residue after the N-terminal Cys is not an aspartate (The Asp acts as a targeting signal to indicate that the lipoprotein should stay in the inner membrane). In Actinobacillus succinogenes (strain ATCC 55618 / DSM 22257 / CCUG 43843 / 130Z), this protein is Outer-membrane lipoprotein carrier protein.